Consider the following 520-residue polypeptide: Biotinidase (520 aa).

The signal sequence occupies residues 1 to 21 (MSGARTAPALFFLGCSALALG). Residues 49-333 (NPLELVSRQE…TGNTTSEMDP (285 aa)) enclose the CN hydrolase domain. Glutamate 89 (proton acceptor) is an active-site residue. N-linked (GlcNAc...) asparagine glycans are attached at residues asparagine 96, asparagine 127, and asparagine 180. Lysine 189 functions as the Proton donor in the catalytic mechanism. Cysteine 222 (nucleophile) is an active-site residue. Asparagine 326, asparagine 379, and asparagine 466 each carry an N-linked (GlcNAc...) asparagine glycan.

Belongs to the carbon-nitrogen hydrolase superfamily. BTD/VNN family.

It is found in the secreted. Its subcellular location is the extracellular space. The enzyme catalyses biocytin + H2O = biotin + L-lysine. It carries out the reaction biotin amide + H2O = biotin + NH4(+). Functionally, catalytic release of biotin from biocytin, the product of biotin-dependent carboxylases degradation. This chain is Biotinidase (Btd), found in Mus musculus (Mouse).